We begin with the raw amino-acid sequence, 387 residues long: Beta-alanyl-dopamine/carcinine hydrolase (387 aa).

It belongs to the peptidase C45 family. In terms of assembly, the unprocessed protein forms homodimers. May form heterodimers composed of a 15 kDa alpha subunit and a 30 kDa beta subunit. Post-translationally, the protein is synthesized as a 43 kDa precursor which is then self-processed into a 15 kDa alpha subunit and a 30 kDa beta subunit. Processing appears to be necessary for beta-alanyl-dopamine/carcinine hydrolase activity. The beta subunit carries the beta-alanyl-dopamine/carcinine hydrolase activity. In terms of tissue distribution, expressed in body, head, optic lobes and retina (at protein level). Expressed in photoreceptor cells R1-R6 in the lamina and in photoreceptor cells R7 and R8 in the medulla (at protein level).

The protein resides in the cell projection. It is found in the axon. It localises to the cytoplasm. It carries out the reaction carcinine + H2O = histamine + beta-alanine. The catalysed reaction is beta-alanyl-dopamine + H2O = dopamine + beta-alanine. In the cuticle, catalyzes the hydrolysis of beta-alanyl-dopamine releasing dopamine and beta-alanine; dopamine is a metabolite involved in the pigmentation and sclerotization of the insect cuticle. In the photoreceptor cells, catalyzes the hydrolysis of carcinine releasing histamine and beta-alanine contributing to the recycling of the neurotransmitter histamine in the optical nerve system. Also, regulates the cuticular hydrocarbon composition in females. The polypeptide is Beta-alanyl-dopamine/carcinine hydrolase (Drosophila melanogaster (Fruit fly)).